The sequence spans 956 residues: MAM domain-containing glycosylphosphatidylinositol anchor protein 1 (956 aa).

A signal peptide spans 1–18; sequence MEVTCLLLLALIPFHCRG. Ig-like domains are found at residues 24–123 and 132–230; these read PAQA…KSIR and PVLT…KSIT. N-linked (GlcNAc...) asparagine glycosylation occurs at N42. Disulfide bonds link C60-C108 and C157-C214. N235, N257, and N307 each carry an N-linked (GlcNAc...) asparagine glycan. Ig-like domains are found at residues 240–323, 338–432, 440–534, and 539–632; these read PTLK…KTVN, PDMI…VEVN, PTIS…VQLT, and PEVE…FQVS. 4 cysteine pairs are disulfide-bonded: C262/C308, C357/C415, C463/C514, and C560/C616. A Fibronectin type-III domain is found at 644–744; the sequence is TPNPTRSHKL…SRVIHYTEPI (101 aa). The 168-residue stretch at 752–919 folds into the MAM domain; the sequence is NTCHFEDEKI…VTLKKGECPR (168 aa). Over residues 780–789 the composition is skewed to polar residues; it reads LTQNPKRSPN. The tract at residues 780-799 is disordered; it reads LTQNPKRSPNTGPPTDISGT. A lipid anchor (GPI-anchor amidated serine) is attached at S933. The propeptide at 934–956 is removed in mature form; the sequence is GAPRLSSLQLWGSMTIFLLALQR.

Interacts heterophilically through its MAM domain with proteins in axon-rich regions and through its Ig-like domains with proteins in differentiating muscle. Interacts (through the Ig-like domains) with NLGN2. In terms of tissue distribution, high levels detected in developing central and peripheral nervous systems with little expression elsewhere. In brain, highest levels in cerebral cortex and hindbrain at E15. At postnatal day 1, highest levels in basilar pons and superficial layers of the neocortex. In the developing spinal cord, restricted to a subpopulation of neurons in the dorsal and spinal ventral cord, probably D1 interneurons. Expressed in brain.

Its subcellular location is the cell membrane. Its function is as follows. Required for radial migration of cortical neurons in the superficial layer of the neocortex. Plays a role in the formation or maintenance of inhibitory synapses. May function by inhibiting the activity of NLGN2. The sequence is that of MAM domain-containing glycosylphosphatidylinositol anchor protein 1 (Mdga1) from Rattus norvegicus (Rat).